The chain runs to 864 residues: Leucine--tRNA ligase (864 aa).

The 'HIGH' region signature appears at 50 to 60 (PYPSGKIHMGH). The 'KMSKS' region motif lies at 622–626 (KMSKS). Lys625 provides a ligand contact to ATP.

Belongs to the class-I aminoacyl-tRNA synthetase family.

It is found in the cytoplasm. The enzyme catalyses tRNA(Leu) + L-leucine + ATP = L-leucyl-tRNA(Leu) + AMP + diphosphate. The sequence is that of Leucine--tRNA ligase from Acidiphilium cryptum (strain JF-5).